A 431-amino-acid polypeptide reads, in one-letter code: Na(+)-translocating NADH-quinone reductase subunit F (431 aa).

Residues isoleucine 10–isoleucine 30 traverse the membrane as a helical segment. One can recognise a 2Fe-2S ferredoxin-type domain in the interval cysteine 41–tyrosine 133. Residues cysteine 76, cysteine 82, cysteine 85, and cysteine 117 each contribute to the [2Fe-2S] cluster site. The FAD-binding FR-type domain occupies alanine 136–lysine 286.

Belongs to the NqrF family. As to quaternary structure, composed of six subunits; NqrA, NqrB, NqrC, NqrD, NqrE and NqrF. Requires [2Fe-2S] cluster as cofactor. It depends on FAD as a cofactor.

It is found in the cell inner membrane. It carries out the reaction a ubiquinone + n Na(+)(in) + NADH + H(+) = a ubiquinol + n Na(+)(out) + NAD(+). In terms of biological role, NQR complex catalyzes the reduction of ubiquinone-1 to ubiquinol by two successive reactions, coupled with the transport of Na(+) ions from the cytoplasm to the periplasm. The first step is catalyzed by NqrF, which accepts electrons from NADH and reduces ubiquinone-1 to ubisemiquinone by a one-electron transfer pathway. This is Na(+)-translocating NADH-quinone reductase subunit F from Chlamydia caviae (strain ATCC VR-813 / DSM 19441 / 03DC25 / GPIC) (Chlamydophila caviae).